The following is a 224-amino-acid chain: Non-structural protein 3 (224 aa).

One can recognise a CoV 3a-like viroporin TM domain in the interval 34–124 (NVVPIRQASN…RYKNALFIIF (91 aa)). Transmembrane regions (helical) follow at residues 40 to 60 (QASN…FALF), 69 to 88 (YIML…LLYY), and 95 to 111 (ATII…LVCF). Positions 128 to 203 (TLSFLNGKAA…KLYVFSQHQI (76 aa)) constitute a CoV 3a-like viroporin CD domain.

The protein resides in the host membrane. The protein is Non-structural protein 3 of Sus scrofa (Pig).